Reading from the N-terminus, the 246-residue chain is 1-(5-phosphoribosyl)-5-[(5-phosphoribosylamino)methylideneamino] imidazole-4-carboxamide isomerase (246 aa).

Aspartate 7 functions as the Proton acceptor in the catalytic mechanism. Aspartate 129 serves as the catalytic Proton donor.

It belongs to the HisA/HisF family.

Its subcellular location is the cytoplasm. It catalyses the reaction 1-(5-phospho-beta-D-ribosyl)-5-[(5-phospho-beta-D-ribosylamino)methylideneamino]imidazole-4-carboxamide = 5-[(5-phospho-1-deoxy-D-ribulos-1-ylimino)methylamino]-1-(5-phospho-beta-D-ribosyl)imidazole-4-carboxamide. Its pathway is amino-acid biosynthesis; L-histidine biosynthesis; L-histidine from 5-phospho-alpha-D-ribose 1-diphosphate: step 4/9. The protein is 1-(5-phosphoribosyl)-5-[(5-phosphoribosylamino)methylideneamino] imidazole-4-carboxamide isomerase of Buchnera aphidicola subsp. Acyrthosiphon pisum (strain Tuc7).